The primary structure comprises 486 residues: Protein nucleotidyltransferase YdiU (486 aa).

Positions 90, 92, 93, 113, 125, 126, 176, and 183 each coordinate ATP. The active-site Proton acceptor is the aspartate 252. Residues asparagine 253 and aspartate 262 each contribute to the Mg(2+) site. An ATP-binding site is contributed by aspartate 262.

It belongs to the SELO family. It depends on Mg(2+) as a cofactor. Mn(2+) is required as a cofactor.

It carries out the reaction L-seryl-[protein] + ATP = 3-O-(5'-adenylyl)-L-seryl-[protein] + diphosphate. It catalyses the reaction L-threonyl-[protein] + ATP = 3-O-(5'-adenylyl)-L-threonyl-[protein] + diphosphate. The enzyme catalyses L-tyrosyl-[protein] + ATP = O-(5'-adenylyl)-L-tyrosyl-[protein] + diphosphate. The catalysed reaction is L-histidyl-[protein] + UTP = N(tele)-(5'-uridylyl)-L-histidyl-[protein] + diphosphate. It carries out the reaction L-seryl-[protein] + UTP = O-(5'-uridylyl)-L-seryl-[protein] + diphosphate. It catalyses the reaction L-tyrosyl-[protein] + UTP = O-(5'-uridylyl)-L-tyrosyl-[protein] + diphosphate. Its function is as follows. Nucleotidyltransferase involved in the post-translational modification of proteins. It can catalyze the addition of adenosine monophosphate (AMP) or uridine monophosphate (UMP) to a protein, resulting in modifications known as AMPylation and UMPylation. This is Protein nucleotidyltransferase YdiU from Pseudomonas entomophila (strain L48).